Consider the following 412-residue polypeptide: MNAEIIAVGTELLLGQIANTNAQFLSEKLASIGINVYYHTVVGDNNKRLQQAIEVAEERADMLIFTGGLGPTKDDLTKETIASSLAEELVYDEKALASIGDYFKRTGREFTENNKKQALVLDGATVFANDHGMAPGMGLNKNGKVYILLPGPPKEMKPMYVSYVEPFLRNFTTGENIYSRVLRFFGIGESQLEVKVQDLIDGQTNPTIAPLANDGEVTLRLTAKHQNVDEAEKLIQHVEDLILERVGEFFYGYDQEFLHYKAIELLKKKGLTLACAESLTGGLFGNQVTESAGVSSVFKGGVICYHNDVKQHVLHVPEEVLSTDGAVSKECARYLAENVKELLKADIGISFTGVAGPDASEHKEPGTVFVGLAIKDEPTVVFPLNLSGSRQQIRERSAKYGFYHLYKKLEEI.

This sequence belongs to the CinA family.

This is Putative competence-damage inducible protein from Bacillus cereus (strain ZK / E33L).